A 587-amino-acid chain; its full sequence is MASLRRLTELLCLPVTATAADIKTAYRRTALKYHPDKGGDEEKMKELNTLMEEFRETEGLRADETLEDSDPEPEESGYATFENVSVPDIDGAFFKLMKLKKCMQTYFSVNERRKQQSCPDCHLLITSITKMPQLKAHLYEHFGIKGHIVAHWTGIALLVLQLEKPTRISTVHNFCKKYCTISICSVRGIKKNCVHALIKTLLDVPGLDLEECSIDMNVVDEKQFMHAMLYDYAVQIDCTDALLLLAIYKRLAQPTDKCPECQKDKDTVKRKRSTHIDDHPRHQHNASLFLHIKDQKRLCQCAVDAVLAEKRFRSATMTRDERLKERFRTVLRNIQELLDGETEAIDDFVTAILLFNMLFPDVDVIVDILQTMVKNPPKRRYYIFKGPVNTGKTTVAAAILALCTGASLNVNGTPDRLQFELGCAIDQFMVLFEDVKGTPEPDTNLPSGFGMVNLDNLRDHLEGSVPVNLERKHQNKVSQIFPPGIITMNNYVLPHTIQARARTLVNFKHIKVYAKALRNNISVLEQRLITKPETLLAYLLIRPESEKEISADLRAEFLTVIENLKFEVDERFFQYNNRLHEGLCVHE.

Positions 6–82 (RLTELLCLPV…PEESGYATFE (77 aa)) constitute a J domain. The segment at 58-78 (EGLRADETLEDSDPEPEESGY) is disordered. The segment covering 65–75 (TLEDSDPEPEE) has biased composition (acidic residues). The segment at residues 102–219 (CMQTYFSVNE…EECSIDMNVV (118 aa)) is a DNA-binding region (T-ag OBD). A T-ag D1-type zinc finger spans residues 221 to 319 (EKQFMHAMLY…KRFRSATMTR (99 aa)). Residues Cys-258, Cys-261, His-275, and His-279 each coordinate Zn(2+). Residues 360–520 (PDVDVIVDIL…KVYAKALRNN (161 aa)) enclose the SF3 helicase domain. 386–393 (GPVNTGKT) contributes to the ATP binding site.

Forms homohexamers in the presence of ATP. Interacts with host HDAC1. Interacts (via LXCXE domain) with host RB1; the interaction induces the aberrant dissociation of RB1-E2F1 complex thereby disrupting RB1's activity. Interacts (via LXCXE domain) with host pRB-related proteins RBL1 and RBL2. Interacts (via C-terminus) with host TOP1 and POLA1 allowing DNA replication. Interacts with host TP53, inhibiting TP53 binding to DNA. Interacts with host preinitiation complex components TBP, TFIIA and TFIID to regulate transcription initiation. It depends on Mg(2+) as a cofactor. Post-translationally, phosphorylated on both serine and threonine residues. Small t antigen inhibits the dephosphorylation by the AC form of PP2A. O-Glycosylated near the C-terminal region. In terms of processing, acetylated by CBP in a TP53-dependent manner.

The protein resides in the host nucleus. It carries out the reaction Couples ATP hydrolysis with the unwinding of duplex DNA by translocating in the 3'-5' direction.. The enzyme catalyses ATP + H2O = ADP + phosphate + H(+). Isoform large T antigen is a key early protein essential for both driving viral replication and inducing cellular transformation. Plays a role in viral genome replication by driving entry of quiescent cells into the cell cycle and by autoregulating the synthesis of viral early mRNA. Displays highly oncogenic activities by corrupting the host cellular checkpoint mechanisms that guard cell division and the transcription, replication, and repair of DNA. Participates in the modulation of cellular gene expression preceeding viral DNA replication. This step involves binding to host key cell cycle regulators retinoblastoma protein RB1/pRb and TP53. Induces the disassembly of host E2F1 transcription factors from RB1, thus promoting transcriptional activation of E2F1-regulated S-phase genes. Inhibits host TP53 binding to DNA, abrogating the ability of TP53 to stimulate gene expression. Plays the role of a TFIID-associated factor (TAF) in transcription initiation for all three RNA polymerases, by stabilizing the TBP-TFIIA complex on promoters. Initiates viral DNA replication and unwinding via interactions with the viral origin of replication. Binds two adjacent sites in the SV40 origin. The replication fork movement is facilitated by Large T antigen helicase activity. Has processive 3'-5' DNA helicase activity which requires a short 3' single-stranded region and ATP. Activates the transcription of viral late mRNA, through host TBP and TFIIA stabilization. Interferes with histone deacetylation mediated by HDAC1, leading to activation of transcription. The sequence is that of Large T antigen from Budgerigar fledgling disease virus (BFPyV).